The following is a 64-amino-acid chain: Conotoxin LiC121 (64 aa).

An N-terminal signal peptide occupies residues 1-22 (MRCVPVFIILLLLSPSAPSVDA). A propeptide spanning residues 23-48 (HPKTKDDVPLASFHDDAKRTLQRLWI) is cleaved from the precursor.

The protein belongs to the conotoxin T superfamily. Post-translationally, contains 2 disulfide bonds that can be either 'C1-C3, C2-C4' or 'C1-C4, C2-C3', since these disulfide connectivities have been observed for conotoxins with cysteine framework V (for examples, see AC P0DQQ7 and AC P81755). In terms of tissue distribution, expressed by the venom duct.

Its subcellular location is the secreted. In Conus lividus (Livid cone), this protein is Conotoxin LiC121.